The chain runs to 266 residues: MRLIPLLTPDQVGKWAARHIVNRINAFKPTADRPFVLGLPTGGTPLEAYKHLIDMHKAGQVSFKHVVTFNMDEYVGLPTEHPESYHSFMHRNFFDHVDISSENINLLNGNAADIDAECHQYEEKIRAYGKIHLFMGGVGNDGHIAFNEPASSLASRTRIKTLTHDTRIANSRFFGGDVNQVPKYALTVGVGTLLDAEEVMILVTGHLKAQALQAAVEGNVNHMWTISCLQLHAKGIVVCDEPATMELKMKTVKYFREMEAENIKHL.

Residue D72 is the Proton acceptor; for enolization step of the active site. The For ring-opening step role is filled by D141. Residue H143 is the Proton acceptor; for ring-opening step of the active site. E148 acts as the For ring-opening step in catalysis.

Belongs to the glucosamine/galactosamine-6-phosphate isomerase family. NagB subfamily. As to quaternary structure, homohexamer.

It catalyses the reaction alpha-D-glucosamine 6-phosphate + H2O = beta-D-fructose 6-phosphate + NH4(+). It participates in amino-sugar metabolism; N-acetylneuraminate degradation; D-fructose 6-phosphate from N-acetylneuraminate: step 5/5. Allosterically activated by N-acetylglucosamine 6-phosphate (GlcNAc6P). In terms of biological role, catalyzes the reversible isomerization-deamination of glucosamine 6-phosphate (GlcN6P) to form fructose 6-phosphate (Fru6P) and ammonium ion. This is Glucosamine-6-phosphate deaminase from Erwinia tasmaniensis (strain DSM 17950 / CFBP 7177 / CIP 109463 / NCPPB 4357 / Et1/99).